The following is a 415-amino-acid chain: Queuine tRNA-ribosyltransferase accessory subunit 2 (415 aa).

Cysteine 351, cysteine 353, cysteine 356, and histidine 382 together coordinate Zn(2+).

It belongs to the queuine tRNA-ribosyltransferase family. QTRT2 subfamily. Heterodimer of a catalytic subunit QTRT1 and an accessory subunit QTRT2. The cofactor is Zn(2+).

Its subcellular location is the cytoplasm. It is found in the mitochondrion outer membrane. Its function is as follows. Non-catalytic subunit of the queuine tRNA-ribosyltransferase (TGT) that catalyzes the base-exchange of a guanine (G) residue with queuine (Q) at position 34 (anticodon wobble position) in tRNAs with GU(N) anticodons (tRNA-Asp, -Asn, -His and -Tyr), resulting in the hypermodified nucleoside queuosine (7-(((4,5-cis-dihydroxy-2-cyclopenten-1-yl)amino)methyl)-7-deazaguanosine). This chain is Queuine tRNA-ribosyltransferase accessory subunit 2, found in Homo sapiens (Human).